A 569-amino-acid polypeptide reads, in one-letter code: Peptide transporter PTR_C (569 aa).

Basic and acidic residues predominate over residues 1 to 25; sequence MSQNVDEKVVHDDASVIRSVDRSES. The tract at residues 1–43 is disordered; the sequence is MSQNVDEKVVHDDASVIRSVDRSESDSYPDSVSPEGAEPSEEE. Residues 54–74 traverse the membrane as a helical segment; that stretch reads VPLACWLVAIVELAERFSYYG. Asparagine 98 is a glycosylation site (N-linked (GlcNAc...) asparagine). A run of 3 helical transmembrane segments spans residues 104–124, 134–154, and 159–179; these read ALSYFWQFWCYVTPIFGAWVA, ISIFCVLYIIGILILFVTSLP, and NTSLGGFITAVIVIGIGTGGV. An N-linked (GlcNAc...) asparagine glycan is attached at asparagine 212. The next 8 helical transmembrane spans lie at 215-235, 245-265, 322-342, 366-386, 398-418, 444-464, 479-499, and 510-530; these read IQNVFMFFYLMINIGSLSVIA, FWAAYLLPLCFFVIALLALFL, ALYACKVFLIYPIYWLVYGQM, IDSITIIIFIPICESIVYPFI, IFWGFMFGAAAMVYAAVLQHF, VALQTPAYFLIAISEILASIT, SFIMSIFLVQNAFGSALGIAL, and WTYTGLAVSCFIAGWVFWFLF.

It belongs to the major facilitator superfamily. Proton-dependent oligopeptide transporter (POT/PTR) (TC 2.A.17) family.

It localises to the cell membrane. The enzyme catalyses a dipeptide(out) + H(+)(out) = a dipeptide(in) + H(+)(in). It carries out the reaction an L-amino acid tripeptide(out) + H(+)(out) = an L-amino acid tripeptide(in) + H(+)(in). Its function is as follows. Peptide transporter that exploits the inwardly directed proton motive force to facilitate the cellular uptake of di/tripeptides. Shows strong uptake specificity towards the dipeptides Tyr-Phe and Leu-Gly and the tripeptide Phe-Gly-Gly, when compared to PTR_A and PTR_B. Also able to import peptide-based antifungals such as the peptide-nucleoside drug nikkomycin Z as well as the glucosamine-6-phosphate synthase inhibitor, L-norvalyl-N3-(4-methoxyfumaroyl)-L-2,3-diaminopropionoic acid (Nva-FMDP). This Candidozyma auris (Yeast) protein is Peptide transporter PTR_C.